We begin with the raw amino-acid sequence, 369 residues long: Endophilin-A (369 aa).

The BAR domain occupies 18 to 248 (TEKMGGAEGT…LQEKRSEAES (231 aa)). Residues 227-247 (QCADVLRGLQETLQEKRSEAE) adopt a coiled-coil conformation. Residues 275-294 (GTPSHISSSASPLPSPMRSP) show a composition bias toward low complexity. Residues 275–296 (GTPSHISSSASPLPSPMRSPAK) form a disordered region. Residues 305–364 (QQQPCCQALYDFDPENPGELGFKENDIITLLNRVDDNWYEGAVNGRTGYFPQSYVQVQVP) form the SH3 domain.

This sequence belongs to the endophilin family.

The protein localises to the cytoplasm. Its subcellular location is the membrane. In terms of biological role, required presynaptically at the neuromuscular junction. Implicated in synaptic vesicle endocytosis. The sequence is that of Endophilin-A from Drosophila pseudoobscura pseudoobscura (Fruit fly).